A 148-amino-acid chain; its full sequence is D-aminoacyl-tRNA deacylase (148 aa).

The short motif at 137-138 is the Gly-cisPro motif, important for rejection of L-amino acids element; it reads GP.

This sequence belongs to the DTD family. In terms of assembly, homodimer.

It is found in the cytoplasm. It catalyses the reaction glycyl-tRNA(Ala) + H2O = tRNA(Ala) + glycine + H(+). The catalysed reaction is a D-aminoacyl-tRNA + H2O = a tRNA + a D-alpha-amino acid + H(+). Functionally, an aminoacyl-tRNA editing enzyme that deacylates mischarged D-aminoacyl-tRNAs. Also deacylates mischarged glycyl-tRNA(Ala), protecting cells against glycine mischarging by AlaRS. Acts via tRNA-based rather than protein-based catalysis; rejects L-amino acids rather than detecting D-amino acids in the active site. By recycling D-aminoacyl-tRNA to D-amino acids and free tRNA molecules, this enzyme counteracts the toxicity associated with the formation of D-aminoacyl-tRNA entities in vivo and helps enforce protein L-homochirality. The sequence is that of D-aminoacyl-tRNA deacylase from Lactiplantibacillus plantarum (strain ATCC BAA-793 / NCIMB 8826 / WCFS1) (Lactobacillus plantarum).